The primary structure comprises 324 residues: Probable UDP-sugar transporter protein SLC35A4 (324 aa).

Over 1–18 (MSVEDGGVPGLGRPRKAR) the chain is Cytoplasmic. Residues 19-39 (WTLMLLLSTAMYGAHAPLLAL) traverse the membrane as a helical segment. Topologically, residues 40–52 (CHVDGRVPFRPSS) are lumenal. The helical transmembrane segment at 53–73 (AVLLTELTKLLLCALSLLVGW) threads the bilayer. The Cytoplasmic portion of the chain corresponds to 74–85 (QAWPQGTPPWRQ). Residues 86–106 (AAPFALSALLYGANNNLVIYL) traverse the membrane as a helical segment. Over 107–141 (QRYMDPSTYQVLSNLKIGSTALFYCLCLRHRLSAR) the chain is Lumenal. Residues 142-162 (QGLALLLLMAAGACYAAGGLQ) traverse the membrane as a helical segment. Over 163 to 180 (DPGTTLPGPPSAAATSPM) the chain is Cytoplasmic. The chain crosses the membrane as a helical span at residues 181-201 (PLHITPLGLLLLILYCLISGL). Topologically, residues 202 to 214 (SSVYTELLMKRQR) are lumenal. The chain crosses the membrane as a helical span at residues 215–235 (LPLALQNLFLYSFGVLLNLGL). The Cytoplasmic segment spans residues 236–248 (HAGGGPGPGLLEG). The chain crosses the membrane as a helical span at residues 249–271 (FSGWMALVVLSQALNGLLMSAVM). Topologically, residues 272 to 275 (KHGS) are lumenal. Residues 276 to 298 (SITRLFVVSCSLVVNAVLSAALL) form a helical membrane-spanning segment. Over 299 to 324 (RLQLTAAFFLATLLIGLAVRLYYGSR) the chain is Cytoplasmic.

This sequence belongs to the nucleotide-sugar transporter family. SLC35A subfamily. As to quaternary structure, found in a complex with SLC35A2 and SLC35A3.

The protein resides in the golgi apparatus membrane. The enzyme catalyses CDP-L-ribitol(in) + CDP(out) = CDP-L-ribitol(out) + CDP(in). Its function is as follows. Mediates the transport of CDP-ribitol. Does not exhibit CMP-sialic acid, UDP-galactose and UDP-N-acetylglucosamine transport activity. The protein is Probable UDP-sugar transporter protein SLC35A4 of Bos taurus (Bovine).